The primary structure comprises 231 residues: ATP-dependent dethiobiotin synthetase BioD (231 aa).

An ATP-binding site is contributed by 12 to 17 (EVGKTV). Thr16 serves as a coordination point for Mg(2+). Lys37 is an active-site residue. Ser41 is a binding site for substrate. ATP contacts are provided by residues Asp51, 112 to 115 (EGAG), and 202 to 204 (PKL). Residues Asp51 and Glu112 each contribute to the Mg(2+) site.

It belongs to the dethiobiotin synthetase family. As to quaternary structure, homodimer. It depends on Mg(2+) as a cofactor.

It localises to the cytoplasm. The catalysed reaction is (7R,8S)-7,8-diammoniononanoate + CO2 + ATP = (4R,5S)-dethiobiotin + ADP + phosphate + 3 H(+). Its pathway is cofactor biosynthesis; biotin biosynthesis; biotin from 7,8-diaminononanoate: step 1/2. Functionally, catalyzes a mechanistically unusual reaction, the ATP-dependent insertion of CO2 between the N7 and N8 nitrogen atoms of 7,8-diaminopelargonic acid (DAPA, also called 7,8-diammoniononanoate) to form a ureido ring. The protein is ATP-dependent dethiobiotin synthetase BioD of Bacillus subtilis (strain 168).